Here is a 117-residue protein sequence, read N- to C-terminus: MPSLGTMCSLLLFSVLWVDLAMAGSSFLSPEHQKLQQRKESKKPPAKLQPRALEGSLGPEDTSQVEEAEDELEIRFNAPFDVGIKLSGPQYHQHGQALGKFLQEVLWEDTNEALADE.

Residues 1 to 23 form the signal peptide; that stretch reads MPSLGTMCSLLLFSVLWVDLAMA. Residue Ser-26 is the site of O-decanoyl serine; alternate attachment. Ser-26 carries the O-hexanoyl serine; alternate lipid modification. Ser-26 carries O-octanoyl serine; alternate lipidation. The interval 30–68 is disordered; the sequence is PEHQKLQQRKESKKPPAKLQPRALEGSLGPEDTSQVEEA. The span at 31–43 shows a compositional bias: basic and acidic residues; it reads EHQKLQQRKESKK. Positions 52-75 are cleaved as a propeptide — removed in mature form; the sequence is ALEGSLGPEDTSQVEEAEDELEIR. Leu-98 is subject to Leucine amide. Residues 99–117 constitute a propeptide, removed in mature form; sequence GKFLQEVLWEDTNEALADE.

The protein belongs to the motilin family. In terms of processing, O-octanoylated by GOAT/MBOAT4. O-octanoylation is essential for ghrelin activity. Amidation of Leu-98 is essential for obestatin activity.

The protein resides in the secreted. Its function is as follows. Ghrelin is the ligand for growth hormone secretagogue receptor type 1 (GHSR). Induces the release of growth hormone from the pituitary. Has an appetite-stimulating effect, induces adiposity and stimulates gastric acid secretion. Involved in growth regulation. Obestatin may be the ligand for GPR39. May have an appetite-reducing effect resulting in decreased food intake. May reduce gastric emptying activity and jejunal motility. This Canis lupus familiaris (Dog) protein is Appetite-regulating hormone (GHRL).